Here is a 391-residue protein sequence, read N- to C-terminus: ATP phosphoribosyltransferase regulatory subunit (391 aa).

It belongs to the class-II aminoacyl-tRNA synthetase family. HisZ subfamily. In terms of assembly, heteromultimer composed of HisG and HisZ subunits.

The protein resides in the cytoplasm. Its pathway is amino-acid biosynthesis; L-histidine biosynthesis; L-histidine from 5-phospho-alpha-D-ribose 1-diphosphate: step 1/9. In terms of biological role, required for the first step of histidine biosynthesis. May allow the feedback regulation of ATP phosphoribosyltransferase activity by histidine. The polypeptide is ATP phosphoribosyltransferase regulatory subunit (Prochlorococcus marinus (strain NATL1A)).